The chain runs to 447 residues: Glycerol-3-phosphate acyltransferase ATS11, chloroplastic (447 aa).

The interval 1–21 is disordered; the sequence is MFILSSSSSLPSPLSLSSSRV. Residues 1 to 48 constitute a chloroplast transit peptide; sequence MFILSSSSSLPSPLSLSSSRVSLPPPSSSSLNLLPLSPHFQPPNLACS. The HXXXXD motif signature appears at 217–222; sequence HQTEAD.

It belongs to the GPAT/DAPAT family.

It is found in the plastid. Its subcellular location is the chloroplast stroma. The enzyme catalyses a fatty acyl-[ACP] + sn-glycerol 3-phosphate = a 1-acyl-sn-glycero-3-phosphate + holo-[ACP]. It catalyses the reaction sn-glycerol 3-phosphate + an acyl-CoA = a 1-acyl-sn-glycero-3-phosphate + CoA. The protein operates within phospholipid metabolism; CDP-diacylglycerol biosynthesis; CDP-diacylglycerol from sn-glycerol 3-phosphate: step 1/3. Its function is as follows. Esterifies the acyl-group from acyl-acyl carrier proteins (acyl-ACPs) to the sn-1 position of glycerol-3-phosphate. The physiological acyl donors in chloroplasts are acyl-ACPs, but acyl-CoAs are used as artificial donor for in vitro reactions. The enzyme from chilling-resistant plants discriminates against non-fluid palmitic acid and selects oleic acid whereas the enzyme from sensitive plants accepts both fatty acids. Squash is chilling-sensitive. Preferably utilizes oleoyl groups (18:1-ACP) and has lower affinity to palmitoyl (16:0-ACP) and stearoyl groups (18:0-ACP). The chain is Glycerol-3-phosphate acyltransferase ATS11, chloroplastic from Cucurbita moschata (Winter crookneck squash).